The following is a 239-amino-acid chain: tRNA (guanine-N(7)-)-methyltransferase (239 aa).

Residues E69, E94, D121, and D144 each coordinate S-adenosyl-L-methionine. D144 is a catalytic residue. K148 is a binding site for substrate. Residues 150–155 (RHNKRR) are interaction with RNA. Substrate-binding positions include D180 and 217-220 (TKFE).

Belongs to the class I-like SAM-binding methyltransferase superfamily. TrmB family. As to quaternary structure, monomer.

It catalyses the reaction guanosine(46) in tRNA + S-adenosyl-L-methionine = N(7)-methylguanosine(46) in tRNA + S-adenosyl-L-homocysteine. It functions in the pathway tRNA modification; N(7)-methylguanine-tRNA biosynthesis. Functionally, catalyzes the formation of N(7)-methylguanine at position 46 (m7G46) in tRNA. The polypeptide is tRNA (guanine-N(7)-)-methyltransferase (Shigella flexneri serotype 5b (strain 8401)).